Reading from the N-terminus, the 121-residue chain is Large ribosomal subunit protein uL18 (121 aa).

The protein belongs to the universal ribosomal protein uL18 family. In terms of assembly, part of the 50S ribosomal subunit; part of the 5S rRNA/L5/L18/L25 subcomplex. Contacts the 5S and 23S rRNAs.

Its function is as follows. This is one of the proteins that bind and probably mediate the attachment of the 5S RNA into the large ribosomal subunit, where it forms part of the central protuberance. The chain is Large ribosomal subunit protein uL18 from Albidiferax ferrireducens (strain ATCC BAA-621 / DSM 15236 / T118) (Rhodoferax ferrireducens).